Here is a 217-residue protein sequence, read N- to C-terminus: Probable ribonuclease P protein subunit 1 (217 aa).

The protein belongs to the eukaryotic/archaeal RNase P protein component 1 family.

The protein localises to the nucleus. It is found in the nucleolus. It carries out the reaction Endonucleolytic cleavage of RNA, removing 5'-extranucleotides from tRNA precursor.. Part of ribonuclease P, a protein complex that generates mature tRNA molecules by cleaving their 5'-ends. This Schizosaccharomyces pombe (strain 972 / ATCC 24843) (Fission yeast) protein is Probable ribonuclease P protein subunit 1.